A 451-amino-acid polypeptide reads, in one-letter code: Trigger factor (451 aa).

The 86-residue stretch at 165 to 250 (DDKLTIDFEG…LHQIQAREAL (86 aa)) folds into the PPIase FKBP-type domain.

It belongs to the FKBP-type PPIase family. Tig subfamily.

The protein localises to the cytoplasm. It catalyses the reaction [protein]-peptidylproline (omega=180) = [protein]-peptidylproline (omega=0). Involved in protein export. Acts as a chaperone by maintaining the newly synthesized protein in an open conformation. Functions as a peptidyl-prolyl cis-trans isomerase. This chain is Trigger factor, found in Helicobacter pylori (strain G27).